We begin with the raw amino-acid sequence, 332 residues long: 2,3-diketo-L-gulonate reductase (332 aa).

Catalysis depends on His44, which acts as the Proton donor. Residues 168 to 174, 224 to 225, and 304 to 306 contribute to the NAD(+) site; these read ITMVDMS, WK, and GHE.

It belongs to the LDH2/MDH2 oxidoreductase family. DlgD subfamily. In terms of assembly, homodimer.

It is found in the cytoplasm. The enzyme catalyses 3-dehydro-L-gulonate + NAD(+) = 2,3-dioxo-L-gulonate + NADH + H(+). The catalysed reaction is 3-dehydro-L-gulonate + NADP(+) = 2,3-dioxo-L-gulonate + NADPH + H(+). In terms of biological role, catalyzes the reduction of 2,3-diketo-L-gulonate in the presence of NADH, to form 3-keto-L-gulonate. The chain is 2,3-diketo-L-gulonate reductase from Pasteurella multocida (strain Pm70).